The chain runs to 872 residues: Armadillo repeat-containing protein 3 (872 aa).

ARM repeat units follow at residues 15–54 (DVFDPLMIESKKAATVVLMLNSPEEEILAKACEAIYKFAL), 57–96 (EENKTTLLELGAVEPLTKLLTHEDKIVRRNATMIFGILAS), 98–138 (NDVK…NMSA), 140–179 (YTSKVQIFEHGGLEPLIRLLSSPDPDVKKNSMECIYNLVQ), 181–220 (FQCRAKLQELNAIPPILDLLKSEYPVIQLLALKTLGVIAN), 222–262 (KESR…NCLE), 264–304 (MDTM…KAAY), 306–345 (PENRKLFHEQEVEKCLVALLGSENDGTKIAASQAISAMCE), 346–385 (NSGSKDFFNNQGIPQLIQLLKSDNEEVREAAALALANLTT), 388–427 (PANANAAAEADGIDPLINLLSSKRDGAIANAATVLTNMAM), 429–468 (EPLRLNIQNHDIMHAIISPLRSANTVVQSKAALAVTATAC), and 470–509 (VEARTELRNSGGLEPLVELLRSKNDEVRKHASWAVMVCAG). Residues cysteine 507 and cysteine 518 are each lipidated (S-palmitoyl cysteine). The segment at 610–693 (VSPPSSMEDK…SKGKKEEEKV (84 aa)) is disordered. Low complexity predominate over residues 626 to 635 (RSISSSSSLR). Basic residues predominate over residues 636 to 646 (RSSKEKNKKNS). Over residues 675 to 693 (ATKEKGWRKSKGKKEEEKV) the composition is skewed to basic and acidic residues.

Homodimer. Interacts with PIK3C3, PIK3R4 and BECN1. Interacts (via ARM domains) with ATG14. Post-translationally, palmitoylation is important for its function in autophagy. As to expression, expressed in skeletal muscle, brain, lung, kidney, prostate and testis. In terms of tissue distribution, mainly expressed in skeletal muscle, liver, spleen and thymus. Expressed only in the testis among normal tissues but is expressed frequently in various cancer tissues and, particularly, in pancreatic, lung and endometrial cancers.

Its function is as follows. Essential for male fertility and sperm motility. During spermatogenesis, promotes the autophagic degradation of excessive ribosomes, providing energy resources for mitochondria and thus ensuring sperm flagellar motility. The polypeptide is Armadillo repeat-containing protein 3 (ARMC3) (Homo sapiens (Human)).